The primary structure comprises 737 residues: Fibronectin type III domain-containing protein 7 (737 aa).

The first 25 residues, 1 to 25, serve as a signal peptide directing secretion; it reads MAGRPEKCFSLIRFTLLCLKMVISS. Fibronectin type-III domains are found at residues 28 to 115, 116 to 203, 204 to 288, 289 to 373, 374 to 459, 460 to 544, 545 to 633, and 631 to 715; these read APEI…TVLA, APVL…SPRA, PANI…TVAC, APGR…TAPC, CPND…TAPC, SPEI…TVPC, CPAG…CPLG, and PLGV…YSVT. A glycan (N-linked (GlcNAc...) asparagine) is linked at asparagine 230. A glycan (N-linked (GlcNAc...) asparagine) is linked at asparagine 433.

It is found in the secreted. This Mus musculus (Mouse) protein is Fibronectin type III domain-containing protein 7 (Fndc7).